The chain runs to 96 residues: Protein Vpr (96 aa).

Positions 1–42 (MEQAPEDQGPQREPYNQWALELLEELKNEAVRHFPRIWLHGL) are homooligomerization. Ser79, Ser94, and Ser96 each carry phosphoserine; by host.

It belongs to the HIV-1 VPR protein family. In terms of assembly, homooligomer, may form homodimer. Interacts with p6-gag region of the Pr55 Gag precursor protein through a (Leu-X-X)4 motif near the C-terminus of the P6gag protein. Interacts with host UNG. May interact with host RAD23A/HHR23A. Interacts with host VPRBP/DCAF1, leading to hijack the CUL4A-RBX1-DDB1-DCAF1/VPRBP complex, mediating ubiquitination of host proteins such as TERT and ZGPAT and arrest of the cell cycle in G2 phase. In terms of processing, phosphorylated on several residues by host. These phosphorylations regulate VPR activity for the nuclear import of the HIV-1 pre-integration complex.

Its subcellular location is the virion. The protein localises to the host nucleus. The protein resides in the host extracellular space. Functionally, during virus replication, may deplete host UNG protein, and incude G2-M cell cycle arrest. Acts by targeting specific host proteins for degradation by the 26S proteasome, through association with the cellular CUL4A-DDB1 E3 ligase complex by direct interaction with host VPRPB/DCAF-1. Cell cycle arrest reportedly occurs within hours of infection and is not blocked by antiviral agents, suggesting that it is initiated by the VPR carried into the virion. Additionally, VPR induces apoptosis in a cell cycle dependent manner suggesting that these two effects are mechanistically linked. Detected in the serum and cerebrospinal fluid of AIDS patient, VPR may also induce cell death to bystander cells. In terms of biological role, during virus entry, plays a role in the transport of the viral pre-integration (PIC) complex to the host nucleus. This function is crucial for viral infection of non-dividing macrophages. May act directly at the nuclear pore complex, by binding nucleoporins phenylalanine-glycine (FG)-repeat regions. The chain is Protein Vpr from Human immunodeficiency virus type 1 group M subtype B (isolate MN) (HIV-1).